The sequence spans 110 residues: Cysteine-rich and transmembrane domain-containing protein 1 (110 aa).

The segment covering 1 to 18 has biased composition (pro residues); that stretch reads MNYENPPPYASPPAPYPP. The segment at 1–45 is disordered; that stretch reads MNYENPPPYASPPAPYPPYGQQQPSYPVPNQYPGNPPGPVGYQPA. Low complexity predominate over residues 19 to 29; the sequence is YGQQQPSYPVP. A helical transmembrane segment spans residues 87–104; sequence SGESACLTACWTALCCCC.

This sequence belongs to the CYSTM1 family.

Its subcellular location is the membrane. In Xenopus tropicalis (Western clawed frog), this protein is Cysteine-rich and transmembrane domain-containing protein 1 (cystm1).